Here is a 498-residue protein sequence, read N- to C-terminus: Neoxanthin synthase, chloroplastic (498 aa).

Residues 1–33 constitute a chloroplast transit peptide; the sequence is METLLKPLTSLLLSSPTPHRSIFQQNPPSLNPT. A disordered region spans residues 16 to 38; that stretch reads PTPHRSIFQQNPPSLNPTTKKKS. Polar residues predominate over residues 22 to 33; sequence IFQQNPPSLNPT. 84 to 112 is a binding site for NAD(+); the sequence is VIIIGAGPAGLRLAEHVSKYGIKVCCVDP.

It belongs to the lycopene cyclase family.

The protein localises to the plastid. It is found in the chloroplast. The enzyme catalyses all-trans-violaxanthin = all-trans-neoxanthin. It participates in carotenoid biosynthesis; neoxanthin biosynthesis. Functionally, involved in the synthesis of neoxanthin, the last product of carotenoid synthesis and a precursor of abscisic acid. The chain is Neoxanthin synthase, chloroplastic (NXS) from Solanum tuberosum (Potato).